Consider the following 201-residue polypeptide: Recombination protein RecR (201 aa).

The C4-type zinc-finger motif lies at 60–75 (CSCCGNVDTIDPCTVC). The Toprim domain occupies 83–178 (SMIIVVEDVS…KTTRLAHGVP (96 aa)).

It belongs to the RecR family.

Functionally, may play a role in DNA repair. It seems to be involved in an RecBC-independent recombinational process of DNA repair. It may act with RecF and RecO. The chain is Recombination protein RecR from Allorhizobium ampelinum (strain ATCC BAA-846 / DSM 112012 / S4) (Agrobacterium vitis (strain S4)).